The sequence spans 173 residues: Lens fiber membrane intrinsic protein (173 aa).

Residues 1-3 (MYS) are Cytoplasmic-facing. Residues 4-24 (FMGGGLFCAWVGTILLVVATA) traverse the membrane as a helical segment. Topologically, residues 25 to 66 (TDHWMQYRLSGSFAHQGLWRYCLGNKCFLQTESIAYWNATRA) are extracellular. C-linked (Man) tryptophan glycans are attached at residues W43 and W61. N-linked (GlcNAc...) asparagine glycosylation occurs at N62. The chain crosses the membrane as a helical span at residues 67–87 (FMILSALCATSGIIMGVLAFA). The Cytoplasmic portion of the chain corresponds to 88 to 98 (QQSTFTRLSRP). A helical transmembrane segment spans residues 99–119 (FSAGIMFFASTLFVLLALAIY). The Extracellular portion of the chain corresponds to 120-140 (TGVTVSFLGRRFGDWRFSWSY). A helical transmembrane segment spans residues 141–161 (ILGWVALLMTFFAGIFYMCAY). At 162–173 (RMHECRRLATPR) the chain is on the cytoplasmic side. The residue at position 171 (T171) is a Phosphothreonine.

It belongs to the PMP-22/EMP/MP20 family. As to quaternary structure, seems to be associated with itself or another lens membrane component via disulfide bonds.

It is found in the membrane. In terms of biological role, present in the thicker 16-17 nm junctions of mammalian lens fiber cells, where it may contribute to cell junctional organization. Acts as a receptor for calmodulin. May play an important role in both lens development and cataractogenesis. The polypeptide is Lens fiber membrane intrinsic protein (Lim2) (Mus musculus (Mouse)).